A 365-amino-acid chain; its full sequence is tRNA 2-selenouridine synthase (365 aa).

Residues 15 to 138 (FVNDHPIMDA…MRQFLIETID (124 aa)) form the Rhodanese domain. Catalysis depends on cysteine 98, which acts as the S-selanylcysteine intermediate.

This sequence belongs to the SelU family. As to quaternary structure, monomer.

The catalysed reaction is 5-methylaminomethyl-2-thiouridine(34) in tRNA + selenophosphate + (2E)-geranyl diphosphate + H2O + H(+) = 5-methylaminomethyl-2-selenouridine(34) in tRNA + (2E)-thiogeraniol + phosphate + diphosphate. It catalyses the reaction 5-methylaminomethyl-2-thiouridine(34) in tRNA + (2E)-geranyl diphosphate = 5-methylaminomethyl-S-(2E)-geranyl-thiouridine(34) in tRNA + diphosphate. It carries out the reaction 5-methylaminomethyl-S-(2E)-geranyl-thiouridine(34) in tRNA + selenophosphate + H(+) = 5-methylaminomethyl-2-(Se-phospho)selenouridine(34) in tRNA + (2E)-thiogeraniol. The enzyme catalyses 5-methylaminomethyl-2-(Se-phospho)selenouridine(34) in tRNA + H2O = 5-methylaminomethyl-2-selenouridine(34) in tRNA + phosphate. Involved in the post-transcriptional modification of the uridine at the wobble position (U34) of tRNA(Lys), tRNA(Glu) and tRNA(Gln). Catalyzes the conversion of 2-thiouridine (S2U-RNA) to 2-selenouridine (Se2U-RNA). Acts in a two-step process involving geranylation of 2-thiouridine (S2U) to S-geranyl-2-thiouridine (geS2U) and subsequent selenation of the latter derivative to 2-selenouridine (Se2U) in the tRNA chain. The protein is tRNA 2-selenouridine synthase of Shewanella halifaxensis (strain HAW-EB4).